A 205-amino-acid polypeptide reads, in one-letter code: UPF0056 membrane protein MJ1677 (205 aa).

Transmembrane regions (helical) follow at residues 7-27 (ILAF…PVFI), 49-69 (ALAI…FFGI), 70-90 (SLDA…LDMV), 112-132 (IALM…TACM), 145-165 (FLVI…LLSA), and 185-205 (GLIL…GALL).

It belongs to the UPF0056 (MarC) family.

It localises to the cell membrane. In Methanocaldococcus jannaschii (strain ATCC 43067 / DSM 2661 / JAL-1 / JCM 10045 / NBRC 100440) (Methanococcus jannaschii), this protein is UPF0056 membrane protein MJ1677.